A 100-amino-acid polypeptide reads, in one-letter code: Small ribosomal subunit protein uS14 (100 aa).

This sequence belongs to the universal ribosomal protein uS14 family. As to quaternary structure, part of the 30S ribosomal subunit. Contacts proteins S3 and S10.

Its function is as follows. Binds 16S rRNA, required for the assembly of 30S particles and may also be responsible for determining the conformation of the 16S rRNA at the A site. The chain is Small ribosomal subunit protein uS14 from Trichodesmium erythraeum (strain IMS101).